We begin with the raw amino-acid sequence, 65 residues long: Photosystem II reaction center protein H (65 aa).

Residues 27-47 (GAVPVMAFIGVLLLVFLVIML) form a helical membrane-spanning segment.

Belongs to the PsbH family. PSII is composed of 1 copy each of membrane proteins PsbA, PsbB, PsbC, PsbD, PsbE, PsbF, PsbH, PsbI, PsbJ, PsbK, PsbL, PsbM, PsbT, PsbX, PsbY, Psb30/Ycf12, peripheral proteins PsbO, CyanoQ (PsbQ), PsbU, PsbV and a large number of cofactors. It forms dimeric complexes.

The protein resides in the cellular thylakoid membrane. Functionally, one of the components of the core complex of photosystem II (PSII), required for its stability and/or assembly. PSII is a light-driven water:plastoquinone oxidoreductase that uses light energy to abstract electrons from H(2)O, generating O(2) and a proton gradient subsequently used for ATP formation. It consists of a core antenna complex that captures photons, and an electron transfer chain that converts photonic excitation into a charge separation. The polypeptide is Photosystem II reaction center protein H (Prochlorococcus marinus (strain NATL1A)).